The chain runs to 239 residues: Norbelladine 4'-O-methyltransferase (239 aa).

S-adenosyl-L-methionine contacts are provided by residues Val55, Glu77, 79–80, Ser85, Asp103, and Ala132; that span reads GV. An a divalent metal cation-binding site is contributed by Asp155. Asp157 is a binding site for S-adenosyl-L-methionine. The a divalent metal cation site is built by Asp181 and Asn182.

Belongs to the class I-like SAM-binding methyltransferase superfamily. Cation-dependent O-methyltransferase family. Mg(2+) serves as cofactor. As to expression, mostly expressed in bulbs, and, to a lower extent, in stems and roots.

The enzyme catalyses norbelladine + S-adenosyl-L-methionine = 4'-O-methylnorbelladine + S-adenosyl-L-homocysteine + H(+). It functions in the pathway alkaloid biosynthesis. Its function is as follows. 4'-O-methyltransferase converting norbelladine to 4'-O-methylnorbelladine. 4'-O-methylnorbelladine is a precursor to all Amaryllidaceae alkaloids such as galanthamine, lycorine and haemanthamine, and including haemanthamine- and crinamine-type alkaloids, promising anticancer agents. The chain is Norbelladine 4'-O-methyltransferase from Narcissus pseudonarcissus (Daffodil).